A 446-amino-acid polypeptide reads, in one-letter code: tRNA-2-methylthio-N(6)-dimethylallyladenosine synthase (446 aa).

One can recognise an MTTase N-terminal domain in the interval 3-124 (KKLYIKTYGC…LPELISKVVR (122 aa)). The [4Fe-4S] cluster site is built by Cys12, Cys48, Cys87, Cys162, Cys166, and Cys169. The Radical SAM core domain occupies 148–380 (YPQGASSFIS…QKELAAQQLA (233 aa)). The region spanning 383-446 (ESCIGSTMKV…LNSLSGEIYR (64 aa)) is the TRAM domain.

The protein belongs to the methylthiotransferase family. MiaB subfamily. As to quaternary structure, monomer. [4Fe-4S] cluster serves as cofactor.

The protein resides in the cytoplasm. The enzyme catalyses N(6)-dimethylallyladenosine(37) in tRNA + (sulfur carrier)-SH + AH2 + 2 S-adenosyl-L-methionine = 2-methylsulfanyl-N(6)-dimethylallyladenosine(37) in tRNA + (sulfur carrier)-H + 5'-deoxyadenosine + L-methionine + A + S-adenosyl-L-homocysteine + 2 H(+). Its function is as follows. Catalyzes the methylthiolation of N6-(dimethylallyl)adenosine (i(6)A), leading to the formation of 2-methylthio-N6-(dimethylallyl)adenosine (ms(2)i(6)A) at position 37 in tRNAs that read codons beginning with uridine. This is tRNA-2-methylthio-N(6)-dimethylallyladenosine synthase from Rickettsia bellii (strain RML369-C).